A 99-amino-acid polypeptide reads, in one-letter code: Class II hydrophobin B (99 aa).

The first 15 residues, 1-15 (MKFFAIAALFAGALA), serve as a signal peptide directing secretion. 2 cysteine pairs are disulfide-bonded: Cys-30-Cys-79 and Cys-40-Cys-70.

This sequence belongs to the cerato-ulmin hydrophobin family.

It localises to the secreted. The protein resides in the cell wall. It is found in the vacuole. Its subcellular location is the cytoplasmic vesicle. In terms of biological role, aerial growth, conidiation, and dispersal of filamentous fungi in the environment rely upon a capability of their secreting small amphipathic proteins called hydrophobins (HPBs) with low sequence identity. Class I can self-assemble into an outermost layer of rodlet bundles on aerial cell surfaces, conferring cellular hydrophobicity that supports fungal growth, development and dispersal; whereas Class II form highly ordered films at water-air interfaces through intermolecular interactions but contribute nothing to the rodlet structure. Hyd2B contributes to certain cell wall-related features, such as hydrophobicity but is not involved in cell wall-related events during fungal proliferation in host hemocoel. Does not contribute to conidial hydrophobicity. Involved in insect hemocoel colonization independent of cell hydrophobicity. The protein is Class II hydrophobin B of Beauveria bassiana (strain ARSEF 2860) (White muscardine disease fungus).